A 1232-amino-acid chain; its full sequence is Protein transport protein sec-16A.1 (1232 aa).

Disordered stretches follow at residues G18–A134, R172–E193, P815–D843, K866–E942, Q972–Q1069, and P1140–D1232. Over residues D26–S37 the composition is skewed to polar residues. Residues R67–P76 are compositionally biased toward low complexity. The segment covering S78–N100 has biased composition (polar residues). Over residues Q817–S836 the composition is skewed to polar residues. Low complexity predominate over residues S896–T914. 3 stretches are compositionally biased toward polar residues: residues Q1046–T1060, S1149–S1159, and Y1168–A1178. Residues P1194–P1203 are compositionally biased toward low complexity. The segment covering P1222–D1232 has biased composition (polar residues).

It belongs to the SEC16 family. Interacts with tfg-1 (via N-terminus); the interaction is direct and is required for both the localization of tfg-1 and to maintain the distribution of sec-16A.1 at endoplasmic reticulum exit sites (ERES).

The protein resides in the endoplasmic reticulum. The protein localises to the endoplasmic reticulum-Golgi intermediate compartment. Plays a role in the organization of the endoplasmic reticulum exit sites (ERES), also known as transitional endoplasmic reticulum (tER). In association with tfg-1, accumulates at ERES to positively regulate secretory cargo trafficking from the endoplasmic reticulum to the endoplasmic reticulum-Golgi intermediate compartment (ERGIC) and Golgi apparatus. This Caenorhabditis elegans protein is Protein transport protein sec-16A.1.